Consider the following 416-residue polypeptide: MHPDSSRKLALKAVVNQTFCQVCGQESHGAHFGAITCRACAAFFRRVAAGANFEVKCKDGRGRCKILTNGRSCCKKCRLKKCKDIGMDIQNFQFNRDSFATSTKVAPSLSTFLGRPEFLLSCSPGTSASTSQNKFIDLSPFIKNCKQVLMDDRKIPLAPGKTRLQKLSSSLDFEISANNKKKKTDLRKVSTLGFSEAIQIFENELLMTSKWLAHFEEFHDLGNDFKFKFLECTWNIWNRLERVARTAALLRDQKISNGKGNEIILARNCVIDLRTVKFEVEWFTNYSLSEISYFIEGVGDWSMNKPLQAIIDFNPTEIELNFMLAQISLTCASKQMDSQYQETIDNLQKLIADDLHSYYIKEMRLPVYSSRIQKMMKVNNMVLRVMWERKEKLSIARMFNIFNPNFSHPELVKDVF.

The nuclear receptor DNA-binding region spans 17–94; sequence QTFCQVCGQE…IGMDIQNFQF (78 aa). 2 consecutive NR C4-type zinc fingers follow at residues 20–40 and 57–82; these read CQVC…CRAC and CKDG…LKKC. The NR LBD domain occupies 162 to 415; the sequence is TRLQKLSSSL…FSHPELVKDV (254 aa).

The protein belongs to the nuclear hormone receptor family.

It is found in the nucleus. In terms of biological role, orphan nuclear receptor. The chain is Nuclear hormone receptor family member nhr-59 from Caenorhabditis elegans.